We begin with the raw amino-acid sequence, 1434 residues long: DNA-directed RNA polymerase subunit beta (1434 aa).

The protein belongs to the RNA polymerase beta chain family. In terms of assembly, the RNAP catalytic core consists of 2 alpha, 1 beta, 1 beta' and 1 omega subunit. When a sigma factor is associated with the core the holoenzyme is formed, which can initiate transcription.

It carries out the reaction RNA(n) + a ribonucleoside 5'-triphosphate = RNA(n+1) + diphosphate. Functionally, DNA-dependent RNA polymerase catalyzes the transcription of DNA into RNA using the four ribonucleoside triphosphates as substrates. The sequence is that of DNA-directed RNA polymerase subunit beta from Ureaplasma parvum serovar 3 (strain ATCC 700970).